Here is a 198-residue protein sequence, read N- to C-terminus: uncharacterized protein (198 aa).

A coiled-coil region spans residues 20–58 (ERVRRDEELARLSADKEQAKNDLEESKRRIARLRGTVYE). Residues 144 to 198 (LSNRKTKNPESDRRRQSRKKKSTQIQASDEMKHRRHHVHKVHHYSQKQSSSTTRR) form a disordered region. Residues 176–188 (HRRHHVHKVHHYS) show a composition bias toward basic residues. Residues 189–198 (QKQSSSTTRR) are compositionally biased toward polar residues.

The protein localises to the nucleus. It is found in the nucleolus. This is an uncharacterized protein from Schizosaccharomyces pombe (strain 972 / ATCC 24843) (Fission yeast).